The primary structure comprises 423 residues: Protein CLP1 homolog (423 aa).

ATP is bound by residues Glu-19, Lys-60, and 122–127; that span reads DVGKTT.

It belongs to the Clp1 family. Clp1 subfamily.

Its subcellular location is the nucleus. Required for endonucleolytic cleavage during polyadenylation-dependent pre-mRNA 3'-end formation. The chain is Protein CLP1 homolog (cbc) from Culex quinquefasciatus (Southern house mosquito).